Reading from the N-terminus, the 212-residue chain is Ribosomal RNA large subunit methyltransferase E (212 aa).

A disordered region spans residues 1-26; it reads MPAERPSVSQKPKNPYKRPDAFTKAA. S-adenosyl-L-methionine-binding residues include G63, W65, D83, D101, and D122. Residue K162 is the Proton acceptor of the active site.

The protein belongs to the class I-like SAM-binding methyltransferase superfamily. RNA methyltransferase RlmE family.

It localises to the cytoplasm. The enzyme catalyses uridine(2552) in 23S rRNA + S-adenosyl-L-methionine = 2'-O-methyluridine(2552) in 23S rRNA + S-adenosyl-L-homocysteine + H(+). Specifically methylates the uridine in position 2552 of 23S rRNA at the 2'-O position of the ribose in the fully assembled 50S ribosomal subunit. This chain is Ribosomal RNA large subunit methyltransferase E, found in Sorangium cellulosum (strain So ce56) (Polyangium cellulosum (strain So ce56)).